The chain runs to 819 residues: Probable cadmium/zinc-transporting ATPase HMA1, chloroplastic (819 aa).

The N-terminal 17 residues, Met1–Tyr17, are a transit peptide targeting the chloroplast. The Stromal portion of the chain corresponds to Arg18–Leu122. Positions Asp66–His79 are enriched in basic and acidic residues. Residues Asp66 to His87 form a disordered region. Residues Arg123–Tyr144 traverse the membrane as a helical segment. Topologically, residues Leu145–Ser153 are lumenal. The helical transmembrane segment at Leu154–Asp173 threads the bilayer. Topologically, residues Ala174–Gly180 are stromal. The chain crosses the membrane as a helical span at residues Gly181–Asn201. Residue Ala202 is a topological domain, lumenal. The helical transmembrane segment at Leu203–Thr223 threads the bilayer. Over Ser224–Glu361 the chain is Stromal. The chain crosses the membrane as a helical span at residues Phe362–Leu384. Residues Phe385 to Ser398 are Lumenal-facing. A helical transmembrane segment spans residues Val399–Val416. The Stromal portion of the chain corresponds to Ala417–Val737. Asp453 (4-aspartylphosphate intermediate) is an active-site residue. Mg(2+) contacts are provided by Glu682 and Asp686. A helical transmembrane segment spans residues Lys738 to Leu757. Residues Gly758–Leu762 lie on the Lumenal side of the membrane. Residues Trp763–Val781 traverse the membrane as a helical segment. The Stromal segment spans residues Arg782–His819.

This sequence belongs to the cation transport ATPase (P-type) (TC 3.A.3) family. Type IB subfamily.

The protein localises to the plastid. Its subcellular location is the chloroplast inner membrane. The enzyme catalyses Zn(2+)(in) + ATP + H2O = Zn(2+)(out) + ADP + phosphate + H(+). It carries out the reaction Cd(2+)(in) + ATP + H2O = Cd(2+)(out) + ADP + phosphate + H(+). Its function is as follows. Involved in cadmium/zinc transport. The sequence is that of Probable cadmium/zinc-transporting ATPase HMA1, chloroplastic (HMA1) from Arabidopsis thaliana (Mouse-ear cress).